Consider the following 388-residue polypeptide: L-lactate dehydrogenase (388 aa).

Residues M1–E380 enclose the FMN hydroxy acid dehydrogenase domain. Y24 is a binding site for substrate. FMN-binding residues include S106 and Q127. Y129 is a substrate binding site. Residue T155 participates in FMN binding. R164 provides a ligand contact to substrate. Residue K251 participates in FMN binding. H275 acts as the Proton acceptor in catalysis. R278 is a binding site for substrate. D306–R330 lines the FMN pocket.

This sequence belongs to the FMN-dependent alpha-hydroxy acid dehydrogenase family. FMN is required as a cofactor.

The protein resides in the cell inner membrane. The enzyme catalyses (S)-lactate + A = pyruvate + AH2. Functionally, catalyzes the conversion of L-lactate to pyruvate. Is coupled to the respiratory chain. The protein is L-lactate dehydrogenase of Xanthobacter autotrophicus (strain ATCC BAA-1158 / Py2).